The following is a 142-amino-acid chain: Large ribosomal subunit protein uL13 (142 aa).

Belongs to the universal ribosomal protein uL13 family. Part of the 50S ribosomal subunit.

Its function is as follows. This protein is one of the early assembly proteins of the 50S ribosomal subunit, although it is not seen to bind rRNA by itself. It is important during the early stages of 50S assembly. This is Large ribosomal subunit protein uL13 from Burkholderia pseudomallei (strain 1106a).